Reading from the N-terminus, the 191-residue chain is Protein GrpE (191 aa).

This sequence belongs to the GrpE family. As to quaternary structure, homodimer.

Its subcellular location is the cytoplasm. In terms of biological role, participates actively in the response to hyperosmotic and heat shock by preventing the aggregation of stress-denatured proteins, in association with DnaK and GrpE. It is the nucleotide exchange factor for DnaK and may function as a thermosensor. Unfolded proteins bind initially to DnaJ; upon interaction with the DnaJ-bound protein, DnaK hydrolyzes its bound ATP, resulting in the formation of a stable complex. GrpE releases ADP from DnaK; ATP binding to DnaK triggers the release of the substrate protein, thus completing the reaction cycle. Several rounds of ATP-dependent interactions between DnaJ, DnaK and GrpE are required for fully efficient folding. This is Protein GrpE from Listeria monocytogenes serotype 4b (strain CLIP80459).